Here is a 75-residue protein sequence, read N- to C-terminus: Phytosulfokines (75 aa).

A signal peptide spans 1–22 (MSSKAITLLLIALLFSLSLAQA). The propeptide occupies 23-66 (ARPLQPADSTKSVHVIPEKVHDEACEGVGEEECLMRRTLTAHVD). Sulfotyrosine occurs at positions 67 and 69. A propeptide spanning residues 72–75 (DHNP) is cleaved from the precursor.

It belongs to the phytosulfokine family. Sulfation is important for activity and for the binding to a putative membrane receptor. Deletion of the sulfate groups of Tyr-67 and Tyr-69 resulted in compounds with respectively 0.6% and 4% of the activity. Post-translationally, PSK-alpha is produced by endopeptidase digestion. PSK-beta is produced from PSK-alpha by exopeptidase digestion.

It is found in the secreted. Promotes plant cell differentiation, organogenesis and somatic embryogenesis as well as cell proliferation. The sequence is that of Phytosulfokines (PSK) from Asparagus officinalis (Garden asparagus).